The following is a 205-amino-acid chain: Ephrin-A1 (205 aa).

An N-terminal signal peptide occupies residues methionine 1 to alanine 17. The Ephrin RBD domain occupies alanine 18–proline 161. A glycan (N-linked (GlcNAc...) asparagine) is linked at asparagine 26. 2 disulfides stabilise this stretch: cysteine 51-cysteine 92 and cysteine 80-cysteine 140. Serine 182 is lipidated: GPI-anchor amidated serine. The propeptide at alanine 183–glutamine 205 is removed in mature form.

Belongs to the ephrin family. As to quaternary structure, monomer. Homodimer. Forms heterodimers with EPHA2. Binds to the receptor tyrosine kinases EPHA2, EPHA3, EPHA4, EPHA5, EPHA6 and EPHA7. Also binds with low affinity to EPHA1. Undergoes proteolysis by a metalloprotease to give rise to a soluble monomeric form. Post-translationally, N-Glycosylation is required for binding to EPHA2 receptor and inducing its internalization. As to expression, expressed in myogenic progenitor cells.

It localises to the cell membrane. The protein localises to the secreted. Its function is as follows. Cell surface GPI-bound ligand for Eph receptors, a family of receptor tyrosine kinases which are crucial for migration, repulsion and adhesion during neuronal, vascular and epithelial development. Binds promiscuously Eph receptors residing on adjacent cells, leading to contact-dependent bidirectional signaling into neighboring cells. Plays an important role in angiogenesis and tumor neovascularization. The recruitment of VAV2, VAV3 and PI3-kinase p85 subunit by phosphorylated EPHA2 is critical for EFNA1-induced RAC1 GTPase activation and vascular endothelial cell migration and assembly. Exerts anti-oncogenic effects in tumor cells through activation and down-regulation of EPHA2. Activates EPHA2 by inducing tyrosine phosphorylation which leads to its internalization and degradation. Acts as a negative regulator in the tumorigenesis of gliomas by down-regulating EPHA2 and FAK. Can evoke collapse of embryonic neuronal growth cone and regulates dendritic spine morphogenesis. The polypeptide is Ephrin-A1 (Efna1) (Mus musculus (Mouse)).